Reading from the N-terminus, the 375-residue chain is Queuine tRNA-ribosyltransferase (375 aa).

The Proton acceptor role is filled by Asp-89. Residues 89–93, Asp-143, Gln-187, and Gly-214 each bind substrate; that span reads DSGGF. The tract at residues 245 to 251 is RNA binding; the sequence is GVGKPED. Asp-264 acts as the Nucleophile in catalysis. Residues 269–273 are RNA binding; important for wobble base 34 recognition; the sequence is TRNAR. Zn(2+) is bound by residues Cys-302, Cys-304, Cys-307, and His-333.

This sequence belongs to the queuine tRNA-ribosyltransferase family. Homodimer. Within each dimer, one monomer is responsible for RNA recognition and catalysis, while the other monomer binds to the replacement base PreQ1. It depends on Zn(2+) as a cofactor.

It carries out the reaction 7-aminomethyl-7-carbaguanine + guanosine(34) in tRNA = 7-aminomethyl-7-carbaguanosine(34) in tRNA + guanine. It participates in tRNA modification; tRNA-queuosine biosynthesis. In terms of biological role, catalyzes the base-exchange of a guanine (G) residue with the queuine precursor 7-aminomethyl-7-deazaguanine (PreQ1) at position 34 (anticodon wobble position) in tRNAs with GU(N) anticodons (tRNA-Asp, -Asn, -His and -Tyr). Catalysis occurs through a double-displacement mechanism. The nucleophile active site attacks the C1' of nucleotide 34 to detach the guanine base from the RNA, forming a covalent enzyme-RNA intermediate. The proton acceptor active site deprotonates the incoming PreQ1, allowing a nucleophilic attack on the C1' of the ribose to form the product. After dissociation, two additional enzymatic reactions on the tRNA convert PreQ1 to queuine (Q), resulting in the hypermodified nucleoside queuosine (7-(((4,5-cis-dihydroxy-2-cyclopenten-1-yl)amino)methyl)-7-deazaguanosine). The sequence is that of Queuine tRNA-ribosyltransferase from Salmonella agona (strain SL483).